Here is a 376-residue protein sequence, read N- to C-terminus: Queuine tRNA-ribosyltransferase (376 aa).

The active-site Proton acceptor is the aspartate 90. Substrate is bound by residues 90 to 94, aspartate 144, glutamine 193, and glycine 220; that span reads DSGGF. The segment at 251–257 is RNA binding; it reads GVGTPED. Aspartate 270 functions as the Nucleophile in the catalytic mechanism. The RNA binding; important for wobble base 34 recognition stretch occupies residues 275-279; it reads TRNAR. Positions 308, 310, 313, and 339 each coordinate Zn(2+).

Belongs to the queuine tRNA-ribosyltransferase family. Homodimer. Within each dimer, one monomer is responsible for RNA recognition and catalysis, while the other monomer binds to the replacement base PreQ1. Zn(2+) serves as cofactor.

The catalysed reaction is 7-aminomethyl-7-carbaguanine + guanosine(34) in tRNA = 7-aminomethyl-7-carbaguanosine(34) in tRNA + guanine. The protein operates within tRNA modification; tRNA-queuosine biosynthesis. Functionally, catalyzes the base-exchange of a guanine (G) residue with the queuine precursor 7-aminomethyl-7-deazaguanine (PreQ1) at position 34 (anticodon wobble position) in tRNAs with GU(N) anticodons (tRNA-Asp, -Asn, -His and -Tyr). Catalysis occurs through a double-displacement mechanism. The nucleophile active site attacks the C1' of nucleotide 34 to detach the guanine base from the RNA, forming a covalent enzyme-RNA intermediate. The proton acceptor active site deprotonates the incoming PreQ1, allowing a nucleophilic attack on the C1' of the ribose to form the product. After dissociation, two additional enzymatic reactions on the tRNA convert PreQ1 to queuine (Q), resulting in the hypermodified nucleoside queuosine (7-(((4,5-cis-dihydroxy-2-cyclopenten-1-yl)amino)methyl)-7-deazaguanosine). The protein is Queuine tRNA-ribosyltransferase of Cupriavidus taiwanensis (strain DSM 17343 / BCRC 17206 / CCUG 44338 / CIP 107171 / LMG 19424 / R1) (Ralstonia taiwanensis (strain LMG 19424)).